Reading from the N-terminus, the 213-residue chain is ATP phosphoribosyltransferase (213 aa).

Belongs to the ATP phosphoribosyltransferase family. Short subfamily. In terms of assembly, heteromultimer composed of HisG and HisZ subunits.

It is found in the cytoplasm. It carries out the reaction 1-(5-phospho-beta-D-ribosyl)-ATP + diphosphate = 5-phospho-alpha-D-ribose 1-diphosphate + ATP. The protein operates within amino-acid biosynthesis; L-histidine biosynthesis; L-histidine from 5-phospho-alpha-D-ribose 1-diphosphate: step 1/9. Its function is as follows. Catalyzes the condensation of ATP and 5-phosphoribose 1-diphosphate to form N'-(5'-phosphoribosyl)-ATP (PR-ATP). Has a crucial role in the pathway because the rate of histidine biosynthesis seems to be controlled primarily by regulation of HisG enzymatic activity. This chain is ATP phosphoribosyltransferase, found in Chromobacterium violaceum (strain ATCC 12472 / DSM 30191 / JCM 1249 / CCUG 213 / NBRC 12614 / NCIMB 9131 / NCTC 9757 / MK).